A 324-amino-acid chain; its full sequence is Fructose-1,6-bisphosphatase class 1 (324 aa).

Residues E88, D107, L109, and D110 each contribute to the Mg(2+) site. Substrate contacts are provided by residues 110 to 113 (DGSS), N199, and K265. E271 lines the Mg(2+) pocket.

It belongs to the FBPase class 1 family. In terms of assembly, homotetramer. Mg(2+) is required as a cofactor.

The protein localises to the cytoplasm. It carries out the reaction beta-D-fructose 1,6-bisphosphate + H2O = beta-D-fructose 6-phosphate + phosphate. Its pathway is carbohydrate biosynthesis; gluconeogenesis. This Neisseria meningitidis serogroup B (strain ATCC BAA-335 / MC58) protein is Fructose-1,6-bisphosphatase class 1.